A 372-amino-acid polypeptide reads, in one-letter code: ATP phosphoribosyltransferase regulatory subunit (372 aa).

The protein belongs to the class-II aminoacyl-tRNA synthetase family. HisZ subfamily. In terms of assembly, heteromultimer composed of HisG and HisZ subunits.

It is found in the cytoplasm. The protein operates within amino-acid biosynthesis; L-histidine biosynthesis; L-histidine from 5-phospho-alpha-D-ribose 1-diphosphate: step 1/9. Functionally, required for the first step of histidine biosynthesis. May allow the feedback regulation of ATP phosphoribosyltransferase activity by histidine. The chain is ATP phosphoribosyltransferase regulatory subunit from Allorhizobium ampelinum (strain ATCC BAA-846 / DSM 112012 / S4) (Agrobacterium vitis (strain S4)).